A 329-amino-acid polypeptide reads, in one-letter code: Ribosomal RNA small subunit methyltransferase C (329 aa).

Belongs to the methyltransferase superfamily. RsmC family. As to quaternary structure, monomer.

It is found in the cytoplasm. It catalyses the reaction guanosine(1207) in 16S rRNA + S-adenosyl-L-methionine = N(2)-methylguanosine(1207) in 16S rRNA + S-adenosyl-L-homocysteine + H(+). Specifically methylates the guanine in position 1207 of 16S rRNA in the 30S particle. The sequence is that of Ribosomal RNA small subunit methyltransferase C from Actinobacillus pleuropneumoniae serotype 5b (strain L20).